Consider the following 105-residue polypeptide: Large ribosomal subunit protein uL24 (105 aa).

The protein belongs to the universal ribosomal protein uL24 family. Part of the 50S ribosomal subunit.

Functionally, one of two assembly initiator proteins, it binds directly to the 5'-end of the 23S rRNA, where it nucleates assembly of the 50S subunit. One of the proteins that surrounds the polypeptide exit tunnel on the outside of the subunit. The polypeptide is Large ribosomal subunit protein uL24 (Tolumonas auensis (strain DSM 9187 / NBRC 110442 / TA 4)).